Here is a 358-residue protein sequence, read N- to C-terminus: Putative purine permease 12 (358 aa).

The next 10 membrane-spanning stretches (helical) occupy residues W29 to L49, W62 to L82, L100 to V120, S128 to I148, I153 to L173, L189 to M209, V235 to V255, L280 to L299, I300 to F316, and L320 to Y340.

Belongs to the purine permeases (TC 2.A.7.14) family.

The protein localises to the membrane. The sequence is that of Putative purine permease 12 (PUP12) from Arabidopsis thaliana (Mouse-ear cress).